The following is a 213-amino-acid chain: Probable nicotinate-nucleotide adenylyltransferase (213 aa).

This sequence belongs to the NadD family.

The catalysed reaction is nicotinate beta-D-ribonucleotide + ATP + H(+) = deamido-NAD(+) + diphosphate. The protein operates within cofactor biosynthesis; NAD(+) biosynthesis; deamido-NAD(+) from nicotinate D-ribonucleotide: step 1/1. In terms of biological role, catalyzes the reversible adenylation of nicotinate mononucleotide (NaMN) to nicotinic acid adenine dinucleotide (NaAD). The protein is Probable nicotinate-nucleotide adenylyltransferase of Citrobacter koseri (strain ATCC BAA-895 / CDC 4225-83 / SGSC4696).